Consider the following 182-residue polypeptide: Translation initiation factor IF-3 (182 aa).

The tract at residues 1–22 (MPLGDCNISTPDNKQNRKNQEI) is disordered.

Belongs to the IF-3 family. Monomer.

Its subcellular location is the cytoplasm. IF-3 binds to the 30S ribosomal subunit and shifts the equilibrium between 70S ribosomes and their 50S and 30S subunits in favor of the free subunits, thus enhancing the availability of 30S subunits on which protein synthesis initiation begins. The sequence is that of Translation initiation factor IF-3 from Xanthomonas axonopodis pv. citri (strain 306).